Consider the following 367-residue polypeptide: MTAHRDAIRTARSLVVKVGTNALTTPAGVFDAGRLAGLADAIEARMKAGTDVVIVSSGAIAAGIEPLGLSRRPRDLATKQAAASVGQVALVNSWSAAFARYGRTVGQVLLSAHDISMRAQHTNAQRTLDRLRALHAVAIVNENDTVATNEIRFGDNDRLSALVAHLVGAEALVLLSDIDGLYDSDPRKTKGAKFIPEVTGAEDLAGVVAGPGSDLGTGGMTSKMSSALLAADAGVPVLLAAAADAASALTDASVGTVFAARPVRMSARRFWVRYAAEAAGALTLDEGAVRAVVHQRRSLLPAGITAVSGRFYAGDVVELRGPDAVPVARGVVAYDATELATMMGRSTSELPGELRRPAVHADDLVAV.

Lys-17 is an ATP binding site. Substrate is bound by residues Ser-57, Asp-144, and Asn-156. Residues 176-177 and 217-223 each bind ATP; these read SD and TGGMTSK. Residues 279 to 357 enclose the PUA domain; sequence AGALTLDEGA…SELPGELRRP (79 aa).

This sequence belongs to the glutamate 5-kinase family.

It localises to the cytoplasm. The catalysed reaction is L-glutamate + ATP = L-glutamyl 5-phosphate + ADP. It participates in amino-acid biosynthesis; L-proline biosynthesis; L-glutamate 5-semialdehyde from L-glutamate: step 1/2. In terms of biological role, catalyzes the transfer of a phosphate group to glutamate to form L-glutamate 5-phosphate. This is Glutamate 5-kinase from Mycobacterium avium (strain 104).